The primary structure comprises 187 residues: Large ribosomal subunit protein uL22 (187 aa).

The tract at residues 161–187 is disordered; the sequence is APTDDAPAKKKLSKKKLARQKEKMMRE. Residues 169 to 178 are compositionally biased toward basic residues; the sequence is KKKLSKKKLA.

It belongs to the universal ribosomal protein uL22 family.

This Bombyx mori (Silk moth) protein is Large ribosomal subunit protein uL22 (RpL17).